The sequence spans 190 residues: Translation initiation factor IF-3 (190 aa).

Belongs to the IF-3 family. Monomer.

It localises to the cytoplasm. Functionally, IF-3 binds to the 30S ribosomal subunit and shifts the equilibrium between 70S ribosomes and their 50S and 30S subunits in favor of the free subunits, thus enhancing the availability of 30S subunits on which protein synthesis initiation begins. This chain is Translation initiation factor IF-3, found in Prochlorococcus marinus (strain MIT 9312).